The primary structure comprises 182 residues: Capsid protein (182 aa).

The disordered stretch occupies residues Asn-136–Cys-182. A compositionally biased stretch (basic residues) spans Val-149–Ser-175. Positions Arg-157–Arg-174 match the Bipartite nuclear localization signal motif. Phosphoserine; by host occurs at positions 161 and 169. A run of 2 repeats spans residues Ser-161 to Gln-168 and Ser-169 to Gln-176. Positions Ser-161–Gln-176 are 2 X 8 AA repeats of S-P-R-R-R-[PR]-S-Q. The RNA binding stretch occupies residues Gln-176 to Cys-182.

The protein belongs to the orthohepadnavirus core antigen family. In terms of assembly, homodimerizes, then multimerizes. Interacts with cytosol exposed regions of viral L glycoprotein present in the reticulum-to-Golgi compartment. Interacts with human FLNB. Phosphorylated form interacts with host importin alpha; this interaction depends on the exposure of the NLS, which itself depends upon genome maturation and/or phosphorylation of the capsid protein. Interacts with host NUP153. Phosphorylated by host SRPK1, SRPK2, and maybe protein kinase C or GAPDH. Phosphorylation is critical for pregenomic RNA packaging. Protein kinase C phosphorylation is stimulated by HBx protein and may play a role in transport of the viral genome to the nucleus at the late step during the viral replication cycle.

Its subcellular location is the virion. It localises to the host cytoplasm. Functionally, self assembles to form an icosahedral capsid. Most capsids appear to be large particles with an icosahedral symmetry of T=4 and consist of 240 copies of capsid protein, though a fraction forms smaller T=3 particles consisting of 180 capsid proteins. Entering capsids are transported along microtubules to the nucleus. Phosphorylation of the capsid is thought to induce exposure of nuclear localization signal in the C-terminal portion of the capsid protein that allows binding to the nuclear pore complex via the importin (karyopherin-) alpha and beta. Capsids are imported in intact form through the nuclear pore into the nuclear basket, where it probably binds NUP153. Only capsids that contain the mature viral genome can release the viral DNA and capsid protein into the nucleoplasm. Immature capsids get stuck in the basket. Capsids encapsulate the pre-genomic RNA and the P protein. Pre-genomic RNA is reverse-transcribed into DNA while the capsid is still in the cytoplasm. The capsid can then either be directed to the nucleus, providing more genomes for transcription, or bud through the endoplasmic reticulum to provide new virions. This chain is Capsid protein, found in Woolly monkey hepatitis B virus (isolate Louisville) (WMHBV).